A 469-amino-acid chain; its full sequence is 3-isopropylmalate dehydratase large subunit (469 aa).

Residues Cys347, Cys410, and Cys413 each coordinate [4Fe-4S] cluster.

This sequence belongs to the aconitase/IPM isomerase family. LeuC type 1 subfamily. As to quaternary structure, heterodimer of LeuC and LeuD. The cofactor is [4Fe-4S] cluster.

The catalysed reaction is (2R,3S)-3-isopropylmalate = (2S)-2-isopropylmalate. It functions in the pathway amino-acid biosynthesis; L-leucine biosynthesis; L-leucine from 3-methyl-2-oxobutanoate: step 2/4. Catalyzes the isomerization between 2-isopropylmalate and 3-isopropylmalate, via the formation of 2-isopropylmaleate. This Burkholderia lata (strain ATCC 17760 / DSM 23089 / LMG 22485 / NCIMB 9086 / R18194 / 383) protein is 3-isopropylmalate dehydratase large subunit.